The primary structure comprises 268 residues: Tryptophan synthase alpha chain (268 aa).

Residues Glu49 and Asp60 each act as proton acceptor in the active site.

Belongs to the TrpA family. In terms of assembly, tetramer of two alpha and two beta chains.

The catalysed reaction is (1S,2R)-1-C-(indol-3-yl)glycerol 3-phosphate + L-serine = D-glyceraldehyde 3-phosphate + L-tryptophan + H2O. The protein operates within amino-acid biosynthesis; L-tryptophan biosynthesis; L-tryptophan from chorismate: step 5/5. In terms of biological role, the alpha subunit is responsible for the aldol cleavage of indoleglycerol phosphate to indole and glyceraldehyde 3-phosphate. This Escherichia coli O81 (strain ED1a) protein is Tryptophan synthase alpha chain.